The chain runs to 126 residues: Diadenosine hexaphosphate hydrolase (126 aa).

One can recognise a Nudix hydrolase domain in the interval 1-121 (MELGAGGVVF…EDLGLLEVAL (121 aa)). Substrate contacts are provided by residues 21-23 (DRM) and 30-32 (KGH). Residues 31 to 52 (GHPEPGESLEEAAVREVWEETG) carry the Nudix box motif. Mg(2+) contacts are provided by Glu-46 and Glu-50. Substrate-binding positions include 66–68 (YVN), Arg-74, and Glu-112.

Belongs to the Nudix hydrolase family. Monomer. The cofactor is Mg(2+).

It carries out the reaction P(1),P(6)-bis(5'-adenosyl) hexaphosphate + H2O = 2 ATP + 2 H(+). It catalyses the reaction P(1),P(5)-bis(5'-adenosyl) pentaphosphate + H2O = ADP + ATP + 2 H(+). The enzyme catalyses P(1),P(4)-bis(5'-adenosyl) tetraphosphate + H2O = AMP + ATP + 2 H(+). Its activity is regulated as follows. Strongly inhibited by fluoride ions. Its function is as follows. Specifically hydrolyzes (di)adenosine polyphosphates but not ATP or diadenosine triphosphate, generating ATP as the product. Diadenosine hexaphosphate (Ap6A) is the preferred substrate and hydrolysis yields 2 ATP. It is the only enzyme that symmetrically hydrolyzes Ap6A. It also hydrolyzes diadenosine pentaphosphate (Ap5A), diadenosine tetraphosphate (Ap4A) and adenosine tetraphosphate (p4A). The sequence is that of Diadenosine hexaphosphate hydrolase from Thermus thermophilus.